Reading from the N-terminus, the 200-residue chain is 3-isopropylmalate dehydratase small subunit (200 aa).

This sequence belongs to the LeuD family. LeuD type 1 subfamily. Heterodimer of LeuC and LeuD.

The enzyme catalyses (2R,3S)-3-isopropylmalate = (2S)-2-isopropylmalate. It participates in amino-acid biosynthesis; L-leucine biosynthesis; L-leucine from 3-methyl-2-oxobutanoate: step 2/4. Catalyzes the isomerization between 2-isopropylmalate and 3-isopropylmalate, via the formation of 2-isopropylmaleate. This is 3-isopropylmalate dehydratase small subunit from Proteus mirabilis (strain HI4320).